Here is a 153-residue protein sequence, read N- to C-terminus: Aminoglycoside N(6')-acetyltransferase type 1 (153 aa).

An N-acetyltransferase domain is found at 6–153; it reads PTIRQATPAD…YFRMPLEPSA (148 aa). 5 residues coordinate substrate: tryptophan 27, tyrosine 70, glutamate 83, aspartate 119, and glutamate 140.

In terms of assembly, homodimer.

It catalyses the reaction kanamycin B + acetyl-CoA = N(6')-acetylkanamycin B + CoA + H(+). Catalyzes the transfer of an acetyl group from acetyl-CoA to the 6'-amino group of aminoglycoside molecules conferring resistance to antibiotics containing the purpurosamine ring including amikacin, gentamicin, kanamycin B, tobramycin, netilmicin, and isepamicin. This Stenotrophomonas maltophilia (Pseudomonas maltophilia) protein is Aminoglycoside N(6')-acetyltransferase type 1.